The primary structure comprises 188 residues: Inosine triphosphate pyrophosphatase (188 aa).

11–16 is a binding site for ITP; it reads TGNKHK. E39 contacts Mg(2+). Residues K51, 67 to 68, K84, 143 to 146, and 171 to 172 each bind ITP; these read DT, FGWN, and HR.

The protein belongs to the HAM1 NTPase family. In terms of assembly, homodimer. Requires Mg(2+) as cofactor. Mn(2+) serves as cofactor.

Its subcellular location is the cytoplasm. The protein resides in the nucleus. It carries out the reaction ITP + H2O = IMP + diphosphate + H(+). The enzyme catalyses dITP + H2O = dIMP + diphosphate + H(+). It catalyses the reaction XTP + H2O = XMP + diphosphate + H(+). Its function is as follows. Pyrophosphatase that hydrolyzes non-canonical purine nucleotides such as inosine triphosphate (ITP), deoxyinosine triphosphate (dITP) or xanthosine 5'-triphosphate (XTP) to their respective monophosphate derivatives. The enzyme does not distinguish between the deoxy- and ribose forms. Probably excludes non-canonical purines from RNA and DNA precursor pools, thus preventing their incorporation into RNA and DNA and avoiding chromosomal lesions. This is Inosine triphosphate pyrophosphatase from Schizosaccharomyces pombe (strain 972 / ATCC 24843) (Fission yeast).